Here is a 164-residue protein sequence, read N- to C-terminus: SsrA-binding protein (164 aa).

The disordered stretch occupies residues 141–164 (KLHDKRQDEKQKSIKKEINSALKR). The segment covering 145–158 (KRQDEKQKSIKKEI) has biased composition (basic and acidic residues).

Belongs to the SmpB family.

It is found in the cytoplasm. Required for rescue of stalled ribosomes mediated by trans-translation. Binds to transfer-messenger RNA (tmRNA), required for stable association of tmRNA with ribosomes. tmRNA and SmpB together mimic tRNA shape, replacing the anticodon stem-loop with SmpB. tmRNA is encoded by the ssrA gene; the 2 termini fold to resemble tRNA(Ala) and it encodes a 'tag peptide', a short internal open reading frame. During trans-translation Ala-aminoacylated tmRNA acts like a tRNA, entering the A-site of stalled ribosomes, displacing the stalled mRNA. The ribosome then switches to translate the ORF on the tmRNA; the nascent peptide is terminated with the 'tag peptide' encoded by the tmRNA and targeted for degradation. The ribosome is freed to recommence translation, which seems to be the essential function of trans-translation. This is SsrA-binding protein from Prochlorococcus marinus (strain MIT 9301).